Consider the following 197-residue polypeptide: Probable calcium-binding protein CML21 (197 aa).

The tract at residues methionine 1–histidine 33 is disordered. Residues serine 9–glutamine 30 are compositionally biased toward low complexity. EF-hand domains are found at residues alanine 37–arginine 72, glutamate 126–proline 161, and alanine 164–asparagine 197. Ca(2+) contacts are provided by aspartate 50, aspartate 52, aspartate 54, glutamate 61, aspartate 139, aspartate 141, aspartate 143, tyrosine 145, glutamate 150, aspartate 177, aspartate 179, aspartate 181, arginine 183, and glutamate 188.

Functionally, potential calcium sensor. The protein is Probable calcium-binding protein CML21 (CML21) of Oryza sativa subsp. japonica (Rice).